A 474-amino-acid chain; its full sequence is Transcription factor fscB (474 aa).

2 disordered regions span residues 114-153 and 207-242; these read VDEL…SYWT and GKEV…NPAP. The span at 120–131 shows a compositional bias: low complexity; the sequence is SSDTRSSLSPSS. Positions 132-153 are enriched in polar residues; that stretch reads HNTTTGHETGLSSVTPPQSYWT. Basic and acidic residues predominate over residues 207–221; sequence GKEVTKRNKRSRTEA. Over residues 222–240 the composition is skewed to polar residues; the sequence is QEASNSPCASSTADSQTNP.

The protein belongs to the POU transcription factor family. Class-3 subfamily.

It localises to the nucleus. Transcription factor; part of the fragmented gene cluster that mediates the biosynthesis of fusarochromene, a tryptophan-derived metabolite closely related to a group of mycotoxins including fusarochromanone. The sequence is that of Transcription factor fscB from Fusarium equiseti (Fusarium scirpi).